The sequence spans 194 residues: Imidazoleglycerol-phosphate dehydratase (194 aa).

This sequence belongs to the imidazoleglycerol-phosphate dehydratase family.

Its subcellular location is the cytoplasm. It carries out the reaction D-erythro-1-(imidazol-4-yl)glycerol 3-phosphate = 3-(imidazol-4-yl)-2-oxopropyl phosphate + H2O. It participates in amino-acid biosynthesis; L-histidine biosynthesis; L-histidine from 5-phospho-alpha-D-ribose 1-diphosphate: step 6/9. This Thermus thermophilus (strain ATCC BAA-163 / DSM 7039 / HB27) protein is Imidazoleglycerol-phosphate dehydratase.